The chain runs to 218 residues: LexA repressor (218 aa).

The H-T-H motif DNA-binding region spans 31-51 (IREIQDGLRISSTSVVAYNLR). Active-site for autocatalytic cleavage activity residues include serine 137 and lysine 176.

Belongs to the peptidase S24 family. In terms of assembly, homodimer.

The enzyme catalyses Hydrolysis of Ala-|-Gly bond in repressor LexA.. In terms of biological role, represses a number of genes involved in the response to DNA damage (SOS response), including recA and lexA. In the presence of single-stranded DNA, RecA interacts with LexA causing an autocatalytic cleavage which disrupts the DNA-binding part of LexA, leading to derepression of the SOS regulon and eventually DNA repair. The polypeptide is LexA repressor (Roseiflexus sp. (strain RS-1)).